We begin with the raw amino-acid sequence, 112 residues long: Putative pterin-4-alpha-carbinolamine dehydratase (112 aa).

Belongs to the pterin-4-alpha-carbinolamine dehydratase family.

The enzyme catalyses (4aS,6R)-4a-hydroxy-L-erythro-5,6,7,8-tetrahydrobiopterin = (6R)-L-erythro-6,7-dihydrobiopterin + H2O. This is Putative pterin-4-alpha-carbinolamine dehydratase from Shewanella amazonensis (strain ATCC BAA-1098 / SB2B).